The chain runs to 89 residues: MVNMKASMFLALAGLVLLFVVCYASESEEKEFSNELLSSVLAVDDNSKGEERECLEIFKACNPSNDQCCKSSKLVCSRKTRWCKYQIGK.

The first 24 residues, 1–24 (MVNMKASMFLALAGLVLLFVVCYA), serve as a signal peptide directing secretion. Positions 25-52 (SESEEKEFSNELLSSVLAVDDNSKGEER) are excised as a propeptide. Pyrrolidone carboxylic acid (Glu); partial is present on E53. 3 disulfide bridges follow: C54-C69, C61-C76, and C68-C83. Residue I87 is modified to Isoleucine amide.

Belongs to the neurotoxin 10 (Hwtx-1) family. 22 (Htx-4) subfamily. In terms of processing, two forms of huwentoxin-IV exist in the venom of H.schmidti, a non-N-terminally modified (HwTx-IV) and a naturally modified peptide with pyroglutamic acid residue at position 53 (mHwTx-IV). mHwTx-IV shows no observable difference with the unmodified toxin when applied to the TTX-S sodium channel of DRG neuron (IC(50)~50 nM) or when tested on hNav1.7/SCN9A (IC(50)=30.8 nM). In addition, similarly to the unmodified toxin, mHwTx-IV has only a weak affinity for lipid membranes. However, in contrast with HwTx-IV, which dissociates at moderate and high depolarization voltages (50-200 mV), mHwTx-IV inhibition of TTX-sensitive sodium channels is not reversed by strong depolarization voltages. As to expression, expressed by the venom gland.

The protein localises to the secreted. This lethal neurotoxin (without cyclization at position 53) inhibits neuronal voltage-gated sodium channel Nav1.2/SCN2A (IC(50)=10-150 nM), rNav1.3/SCN3A (IC(50)=338 nM), Nav1.6/SCN8A (IC(50)=117 nM), and hNav1.7/SCN9A (IC(50)=9.6-33 nM). It inhibits activation of sodium channel by trapping the voltage sensor of domain II (DIIS4) in the closed configuration. The toxin neither shifts the Nav1.7/SCN9A activation curve nor modifies the slope factor. It does not slow fast-inactivation of hNav1.7/SCN9A channels. In addition, it has only a weak affinity for lipid membranes. This toxin also exists with a pyroglutamate at position 53. The sole difference observed between modified (mHwTx-IV) and unmodified toxins is that moderate or high depolarization voltages (200 mV) permit the unmodified toxin to dissociate, whereas mHwTx-IV toxin does not dissociate, even at high depolarization voltages. These data indicate that mHwTx-IV strongly binds to voltage sensor of sodium channel even at extreme depolarization voltages. The polypeptide is Huwentoxin-IV (Cyriopagopus schmidti (Chinese bird spider)).